Reading from the N-terminus, the 589-residue chain is Arginine--tRNA ligase (589 aa).

The short motif at 123 to 133 (ANVAKPMHVGH) is the 'HIGH' region element.

This sequence belongs to the class-I aminoacyl-tRNA synthetase family. In terms of assembly, monomer.

The protein localises to the cytoplasm. It catalyses the reaction tRNA(Arg) + L-arginine + ATP = L-arginyl-tRNA(Arg) + AMP + diphosphate. In Hyphomonas neptunium (strain ATCC 15444), this protein is Arginine--tRNA ligase.